The primary structure comprises 664 residues: Macoilin (664 aa).

Transmembrane regions (helical) follow at residues 28–48 (TFLYLKFLVVWALVLLADFVL), 75–95 (AFSVFFVCVAFTSNIICLLFI), 120–140 (VCLPTVSLWILFVYIEAAIRF), and 154–174 (FAAHCIGYPVVTLGFGFKSYV). Over residues 253-265 (REKGKEKDKDAKK) the composition is skewed to basic and acidic residues. The interval 253 to 274 (REKGKEKDKDAKKHNLGINNNN) is disordered. The residue at position 305 (Ser305) is a Phosphoserine. Polar residues predominate over residues 320–348 (KNYKNASGVVNSSPRSHSATNGSIPSSSS). The tract at residues 320–375 (KNYKNASGVVNSSPRSHSATNGSIPSSSSKNEKKQKCTSKSPSTHKDLMENCIPNN) is disordered. The N-linked (GlcNAc...) asparagine glycan is linked to Asn324. At Ser332 the chain carries Phosphoserine. Asn340 and Asn452 each carry an N-linked (GlcNAc...) asparagine glycan. The segment at 630-664 (TSPLSPVSPHYSSKFVETSPSGLDPNASVYQPLKK) is disordered. Residues Ser631 and Ser634 each carry the phosphoserine modification. Residue Asn655 is glycosylated (N-linked (GlcNAc...) asparagine).

The protein belongs to the macoilin family.

The protein resides in the rough endoplasmic reticulum membrane. It localises to the nucleus membrane. In terms of biological role, plays a role in the regulation of neuronal activity. The sequence is that of Macoilin (MACO1) from Macaca mulatta (Rhesus macaque).